A 205-amino-acid polypeptide reads, in one-letter code: Ribonuclease HII (205 aa).

The region spanning 15 to 205 (SRVCGIDEAG…SFKLRKLGEK (191 aa)) is the RNase H type-2 domain. The a divalent metal cation site is built by D21, E22, and D117.

This sequence belongs to the RNase HII family. The cofactor is Mn(2+). Mg(2+) serves as cofactor.

The protein resides in the cytoplasm. The catalysed reaction is Endonucleolytic cleavage to 5'-phosphomonoester.. In terms of biological role, endonuclease that specifically degrades the RNA of RNA-DNA hybrids. The polypeptide is Ribonuclease HII (Chlorobaculum parvum (strain DSM 263 / NCIMB 8327) (Chlorobium vibrioforme subsp. thiosulfatophilum)).